A 327-amino-acid polypeptide reads, in one-letter code: Fructose-1,6-bisphosphatase class 1 (327 aa).

Residues Glu84, Asp103, Leu105, and Asp106 each coordinate Mg(2+). Residues 106 to 109, Asn197, and Lys263 contribute to the substrate site; that span reads DGSS. A Mg(2+)-binding site is contributed by Glu269.

Belongs to the FBPase class 1 family. As to quaternary structure, homotetramer. Mg(2+) is required as a cofactor.

The protein resides in the cytoplasm. It carries out the reaction beta-D-fructose 1,6-bisphosphate + H2O = beta-D-fructose 6-phosphate + phosphate. The protein operates within carbohydrate biosynthesis; gluconeogenesis. The polypeptide is Fructose-1,6-bisphosphatase class 1 (Idiomarina loihiensis (strain ATCC BAA-735 / DSM 15497 / L2-TR)).